A 201-amino-acid chain; its full sequence is NADH-quinone oxidoreductase subunit I (201 aa).

4Fe-4S ferredoxin-type domains follow at residues 78-107 (MSYE…RIEA) and 116-147 (KVVR…MTDI). [4Fe-4S] cluster-binding residues include C87, C90, C93, C97, C127, C130, C133, and C137.

The protein belongs to the complex I 23 kDa subunit family. As to quaternary structure, NDH-1 is composed of 14 different subunits. Subunits NuoA, H, J, K, L, M, N constitute the membrane sector of the complex. The cofactor is [4Fe-4S] cluster.

The protein resides in the cell inner membrane. The catalysed reaction is a quinone + NADH + 5 H(+)(in) = a quinol + NAD(+) + 4 H(+)(out). NDH-1 shuttles electrons from NADH, via FMN and iron-sulfur (Fe-S) centers, to quinones in the respiratory chain. The immediate electron acceptor for the enzyme in this species is believed to be ubiquinone. Couples the redox reaction to proton translocation (for every two electrons transferred, four hydrogen ions are translocated across the cytoplasmic membrane), and thus conserves the redox energy in a proton gradient. The sequence is that of NADH-quinone oxidoreductase subunit I from Aquifex aeolicus (strain VF5).